The chain runs to 728 residues: MITIVVIPTERFPWTDTNLLNSIDYRLNNIPKSNQRFAVYAPAWLRLQLEEAAVSLTPSQLLAAIQDIHVPVTSTFALLPKAKRFAQWLLDDPSSNIWHIPVTVLNVTATSKHPTSDIFNYVVGHVSPNAELATTASRVSGTQVVYTRTSKVLGAPLRLAAPTSYYSGYLSSQQLSHVYPSSWTPETFKKKEICFTILPSLTSPKTFLLDVDAPRDPSFPLSVMWPLLRNDAVKSHRLMPPNALLRRTVDPALKPEWSADVDPSFRALRLSRPRGANTSSCHNRHHVPVCDIQCALTPEPLNDSEKPPATHITIHAVPSDLLTVLDITVGKEYPLRLESGMYVPWMLMSLLMSDDVTLTGTRRSVKLETAHAAQRPFTQVKILRCVSARVTSVRAGPATYLNAVCLTLPKGSFKSTMIDTLPSLFPEWPVVSTTAIVDSDHLGDSLDPTFEQRFATMLETLPPGTVDQAIRVALATCPTADETALQLIVTSFNELYASCMTEAQRNRVPILTQQGRTLVFAHSDYEMLAANVPIQVIRGAIPIDHTVNIIARPNRVGGTALQLLLDYCYRMQASPIATMPAGALYRQLFGPWLRAKADCEQLTPVSLIAEVPARVMRAAGWTIQDDMPLIINVMRCYRNVDDQIDDVLTRTETSRAIITISADGIILVEYAPPLPLITLPSSILLPATYTATWLEPPRILLTGSNVSVTSGLSWAEVGSPLDVPPPGV.

This sequence belongs to the reoviridae microtubule-associated protein family.

The protein localises to the virion. The protein resides in the host cytoplasm. It is found in the host cytoskeleton. Minor inner capsid component. Displays NTPase and RNA 5'-triphosphatase (RTPase) activities. May function as a cofactor of polymerase. Associates with microtubules and plays a role in the formation, structural organization and morphology of viral inclusions, where the assembly of cores and the replication of viral RNA occur. In Ctenopharyngodon idella (Grass carp), this protein is Microtubule-associated protein VP5 (S5).